Here is a 280-residue protein sequence, read N- to C-terminus: Golgi phosphoprotein 3-like B (280 aa).

Residues 1–32 (MTTLIRRGRRAEEGQERRADSEDSIKDKDEED) form a disordered region. Positions 10–32 (RAEEGQERRADSEDSIKDKDEED) are enriched in basic and acidic residues. The a 1,2-diacyl-sn-glycero-3-phospho-(1D-myo-inositol 4-phosphate) site is built by Trp62, Arg71, Arg152, and Arg155. Residues 171-182 (EKQNFLLFDMTT) form a beta-hairpin required for oligomerization region.

Belongs to the GOLPH3/VPS74 family. Homooligomer.

Its subcellular location is the golgi apparatus. The protein resides in the golgi stack membrane. It localises to the trans-Golgi network membrane. Phosphatidylinositol-4-phosphate-binding protein that may play a role in the process of vesicle budding at the Golgi and anterograde transport to the plasma membrane. This Xenopus laevis (African clawed frog) protein is Golgi phosphoprotein 3-like B (golph3l-b).